Here is a 152-residue protein sequence, read N- to C-terminus: Ribosome maturation factor RimP (152 aa).

This sequence belongs to the RimP family.

Its subcellular location is the cytoplasm. Functionally, required for maturation of 30S ribosomal subunits. The chain is Ribosome maturation factor RimP from Pseudomonas aeruginosa (strain LESB58).